A 384-amino-acid polypeptide reads, in one-letter code: tRNA-specific 2-thiouridylase MnmA (384 aa).

ATP contacts are provided by residues 21 to 28 (GMSGGVDS) and methionine 47. Residues 107–109 (NPD) are interaction with target base in tRNA. The active-site Nucleophile is cysteine 112. A disulfide bond links cysteine 112 and cysteine 208. ATP is bound at residue glycine 136. Residues 158–160 (KDQ) form an interaction with tRNA region. Cysteine 208 acts as the Cysteine persulfide intermediate in catalysis. The interaction with tRNA stretch occupies residues 320–321 (RY).

The protein belongs to the MnmA/TRMU family.

The protein resides in the cytoplasm. The catalysed reaction is S-sulfanyl-L-cysteinyl-[protein] + uridine(34) in tRNA + AH2 + ATP = 2-thiouridine(34) in tRNA + L-cysteinyl-[protein] + A + AMP + diphosphate + H(+). In terms of biological role, catalyzes the 2-thiolation of uridine at the wobble position (U34) of tRNA, leading to the formation of s(2)U34. The polypeptide is tRNA-specific 2-thiouridylase MnmA (Chromohalobacter salexigens (strain ATCC BAA-138 / DSM 3043 / CIP 106854 / NCIMB 13768 / 1H11)).